The following is a 293-amino-acid chain: Plant cysteine oxidase 1 (293 aa).

Positions 148, 150, and 211 each coordinate Fe cation. The tract at residues S250–D293 is disordered. Acidic residues predominate over residues E251–K262. Over residues Q269 to T279 the composition is skewed to basic and acidic residues.

This sequence belongs to the cysteine dioxygenase family. Fe(2+) is required as a cofactor.

It localises to the nucleus. The protein resides in the cytoplasm. It carries out the reaction L-cysteine + O2 = 3-sulfino-L-alanine + H(+). Its function is as follows. Catalyzes the oxidation of N-terminal cysteine residues (N-Cys), thus preparing the protein for N-end rule pathway-mediated proteasomal degradation, upstream of the N-end rule enzymes ATE1, ATE2 and PRT6. Controls the preparation of the group VII ethylene response factor (ERF-VII) proteins for degradation via the 26S proteasome N-end rule pathway. Acts as an oxygen sensor that controls the stability of ERF-VII proteins, which are stabilized in flooding-induced hypoxia, and regulate transcriptional adaptation to these adverse conditions. Not active on Cys located inside or at the C-terminus of a peptide. Acts redundantly with PCO2 to repress the anaerobic response. The polypeptide is Plant cysteine oxidase 1 (Arabidopsis thaliana (Mouse-ear cress)).